Here is a 421-residue protein sequence, read N- to C-terminus: UDP-N-acetylglucosamine 1-carboxyvinyltransferase (421 aa).

22–23 (KN) is a binding site for phosphoenolpyruvate. Arginine 93 contributes to the UDP-N-acetyl-alpha-D-glucosamine binding site. Cysteine 117 serves as the catalytic Proton donor. Cysteine 117 is subject to 2-(S-cysteinyl)pyruvic acid O-phosphothioketal. Residues 122–126 (RPVDL), aspartate 308, and valine 330 each bind UDP-N-acetyl-alpha-D-glucosamine.

Belongs to the EPSP synthase family. MurA subfamily.

It is found in the cytoplasm. The enzyme catalyses phosphoenolpyruvate + UDP-N-acetyl-alpha-D-glucosamine = UDP-N-acetyl-3-O-(1-carboxyvinyl)-alpha-D-glucosamine + phosphate. Its pathway is cell wall biogenesis; peptidoglycan biosynthesis. In terms of biological role, cell wall formation. Adds enolpyruvyl to UDP-N-acetylglucosamine. The polypeptide is UDP-N-acetylglucosamine 1-carboxyvinyltransferase (Pseudomonas paraeruginosa (strain DSM 24068 / PA7) (Pseudomonas aeruginosa (strain PA7))).